A 431-amino-acid polypeptide reads, in one-letter code: Glutamate-1-semialdehyde 2,1-aminomutase (431 aa).

Lys265 is subject to N6-(pyridoxal phosphate)lysine.

The protein belongs to the class-III pyridoxal-phosphate-dependent aminotransferase family. HemL subfamily. Homodimer. Requires pyridoxal 5'-phosphate as cofactor.

The protein localises to the cytoplasm. The catalysed reaction is (S)-4-amino-5-oxopentanoate = 5-aminolevulinate. Its pathway is porphyrin-containing compound metabolism; protoporphyrin-IX biosynthesis; 5-aminolevulinate from L-glutamyl-tRNA(Glu): step 2/2. The protein is Glutamate-1-semialdehyde 2,1-aminomutase of Vibrio vulnificus (strain YJ016).